A 370-amino-acid polypeptide reads, in one-letter code: Versatile peroxidase VPS1 (370 aa).

An N-terminal signal peptide occupies residues Met-1–Gly-20. The propeptide occupies Glu-21 to Arg-31. Intrachain disulfides connect Cys-34–Cys-46, Cys-45–Cys-315, Cys-65–Cys-151, and Cys-279–Cys-344. Residues Glu-67 and Glu-71 each contribute to the Mn(2+) site. His-78 acts as the Proton acceptor in catalysis. Asp-79, Gly-97, Asp-99, and Ser-101 together coordinate Ca(2+). N-linked (GlcNAc...) asparagine glycosylation is present at Asn-133. Trp-201 serves as the catalytic Tryptophan radical intermediate. His-206 lines the heme b pocket. Thr-207 is a binding site for Ca(2+). Position 210–214 (Ala-210–Val-214) interacts with heme b. Asp-212 lines the Mn(2+) pocket. Ca(2+)-binding residues include Asp-224, Thr-226, Thr-229, and Asp-231.

It belongs to the peroxidase family. Ligninase subfamily. It depends on heme b as a cofactor. The cofactor is Ca(2+).

It is found in the secreted. The enzyme catalyses 1-(4-hydroxy-3-methoxyphenyl)-2-(2-methoxyphenoxy)propane-1,3-diol + H2O2 = guaiacol + vanillin + glycolaldehyde + H2O. It catalyses the reaction 2 Mn(2+) + H2O2 + 2 H(+) = 2 Mn(3+) + 2 H2O. A versatile ligninolytic peroxidase that combines the substrate specificity characteristics of the two other ligninolytic peroxidases, manganese peroxidase and lignin peroxidase. The chain is Versatile peroxidase VPS1 (vps1) from Pleurotus eryngii (Boletus of the steppes).